The chain runs to 140 residues: Organic hydroperoxide resistance protein-like (140 aa).

The protein belongs to the OsmC/Ohr family.

In Staphylococcus aureus (strain USA300), this protein is Organic hydroperoxide resistance protein-like.